Reading from the N-terminus, the 243-residue chain is Probable HTH-type transcriptional regulator GfsR (243 aa).

The disordered stretch occupies residues 154–179 (AAVARPDTSGSATGRTGDSSPSLALS). Polar residues predominate over residues 161–178 (TSGSATGRTGDSSPSLAL). An HTH luxR-type domain is found at 171-236 (DSSPSLALSP…QALLRWLGHP (66 aa)). The H-T-H motif DNA-binding region spans 195-214 (VREIAVEMRLAEKTVRNYLS).

It participates in antibiotic biosynthesis. Its function is as follows. Probable DNA-binding protein that contributes to the control of expression of the biosynthesis operon of the 16-membered macrolide antibiotics FD-891 and FD-892. Might be a member of a two-component regulatory system; the putative sensor kinase gene is unknown. This chain is Probable HTH-type transcriptional regulator GfsR, found in Streptomyces halstedii.